We begin with the raw amino-acid sequence, 494 residues long: MPLYSVTVKWGKEKFEGVELNTDEPPMVFKAQLFALTGVQPARQKVMVKGGTLKDDDWGNIKMKNGMTVLMMGSADALPEEPSAKTVFVEDMTEEQLASAMELPCGLTNLGNTCYMNATVQCIRSVPELKDALKRYAGALRASGEMASAQYITAALRDLFDSMDKTSSSIPPIILLQFLHMAFPQFAEKGEQGQYLQQDANECWVQMMRVLQQKLEAIEDDTVKETDSSSASAVTPSKKKSLIDQFFGVEFETTMKCTESEEEEVTKGKESQLQLSCFINQEVKYLFTGLKLRLQEEITKQSPTLQRNALYIKSSKISRLPAYLTIQMVRFFYKEKESVNAKVLKDVKFPLMLDVYELCTPELQEKMVSFRSKFKDLEDKKVNQQPKTGDKDSSPQKEVKYEPFSFADDIGSNNCGYYDLQAVLTHQGRSSSSGHYVSWVKRKQDEWIKFDDDKVSIVTPEDILRLSGGGDWHIAYVLLYGPRRVEIMEEESEQ.

Residues 4-80 form the Ubiquitin-like domain; that stretch reads YSVTVKWGKE…MMGSADALPE (77 aa). At threonine 52 the chain carries Phosphothreonine. One can recognise a USP domain in the interval 105 to 483; sequence CGLTNLGNTC…IAYVLLYGPR (379 aa). Cysteine 114 (nucleophile) is an active-site residue. Serine 143 and serine 148 each carry phosphoserine. Threonine 235 bears the Phosphothreonine mark. A phosphoserine mark is found at serine 237, serine 302, and serine 432. Residue histidine 435 is the Proton acceptor of the active site. Lysine 449 carries the N6-acetyllysine modification.

It belongs to the peptidase C19 family. USP14/UBP6 subfamily. Homodimer (Potential). Associates with the 26S proteasome. Interacts with FANCC, CXCR4 and ERN1. Interacts with TRIM14; this interaction recruits USP14 to cleave ubiquitin chains of CGAS.

The protein localises to the cytoplasm. Its subcellular location is the cell membrane. The enzyme catalyses Thiol-dependent hydrolysis of ester, thioester, amide, peptide and isopeptide bonds formed by the C-terminal Gly of ubiquitin (a 76-residue protein attached to proteins as an intracellular targeting signal).. Proteasome-associated deubiquitinase which releases ubiquitin from the proteasome targeted ubiquitinated proteins. Ensures the regeneration of ubiquitin at the proteasome. Is a reversibly associated subunit of the proteasome and a large fraction of proteasome-free protein exists within the cell. Required for the degradation of the chemokine receptor CXCR4 which is critical for CXCL12-induced cell chemotaxis. Also serves as a physiological inhibitor of endoplasmic reticulum-associated degradation (ERAD) under the non-stressed condition by inhibiting the degradation of unfolded endoplasmic reticulum proteins via interaction with ERN1. Indispensable for synaptic development and function at neuromuscular junctions (NMJs). Plays a role in the innate immune defense against viruses by stabilizing the viral DNA sensor CGAS and thus inhibiting its autophagic degradation. This chain is Ubiquitin carboxyl-terminal hydrolase 14 (USP14), found in Bos taurus (Bovine).